We begin with the raw amino-acid sequence, 217 residues long: Large ribosomal subunit protein uL1 (217 aa).

It belongs to the universal ribosomal protein uL1 family. As to quaternary structure, part of the 50S ribosomal subunit.

In terms of biological role, binds directly to 23S rRNA. The L1 stalk is quite mobile in the ribosome, and is involved in E site tRNA release. Functionally, protein L1 is also a translational repressor protein, it controls the translation of the L11 operon by binding to its mRNA. This is Large ribosomal subunit protein uL1 from Wolbachia pipientis wMel.